A 185-amino-acid polypeptide reads, in one-letter code: Ribosome-recycling factor (185 aa).

The protein belongs to the RRF family.

Its subcellular location is the cytoplasm. Functionally, responsible for the release of ribosomes from messenger RNA at the termination of protein biosynthesis. May increase the efficiency of translation by recycling ribosomes from one round of translation to another. The protein is Ribosome-recycling factor of Hamiltonella defensa subsp. Acyrthosiphon pisum (strain 5AT).